The chain runs to 80 residues: Putative membrane protein insertion efficiency factor (80 aa).

The disordered stretch occupies residues 61 to 80 (KTGKDPVPDHFSLKRNQEGE). A compositionally biased stretch (basic and acidic residues) spans 62–80 (TGKDPVPDHFSLKRNQEGE).

The protein belongs to the UPF0161 family.

The protein resides in the cell membrane. Could be involved in insertion of integral membrane proteins into the membrane. The polypeptide is Putative membrane protein insertion efficiency factor (Streptococcus pneumoniae serotype 2 (strain D39 / NCTC 7466)).